The following is a 204-amino-acid chain: Translation initiation factor 2 subunit beta (204 aa).

Residues 146–204 (NLEEGQVLDVEIQSLSKRGDGVVKMGRYIMYVSNAKPGQSVKIKISRISGSIVFTERAE) form the TRAM domain.

The protein belongs to the eIF-2-beta/eIF-5 family. In terms of assembly, heterotrimer composed of an alpha, a beta and a gamma chain.

Functionally, eIF-2 functions in the early steps of protein synthesis by forming a ternary complex with GTP and initiator tRNA. The chain is Translation initiation factor 2 subunit beta from Methanoregula boonei (strain DSM 21154 / JCM 14090 / 6A8).